Here is a 508-residue protein sequence, read N- to C-terminus: Prenylcysteine oxidase 1 (508 aa).

The signal sequence occupies residues 1–31 (MDPAAPGLACSILRLGLGLLLLCSWWYPGSA). 3 N-linked (GlcNAc...) asparagine glycosylation sites follow: asparagine 199, asparagine 291, and asparagine 356.

The protein belongs to the prenylcysteine oxidase family. FAD serves as cofactor.

It is found in the lysosome. The catalysed reaction is an S-polyprenyl-L-cysteine + O2 + H2O = a polyprenal + L-cysteine + H2O2. It carries out the reaction S-(2E,6E)-farnesyl-L-cysteine + O2 + H2O = (2E,6E)-farnesal + L-cysteine + H2O2. It catalyses the reaction [(2E,6E,10E)-geranylgeranyl]-L-cysteine + O2 + H2O = (2E,6E,10E)-geranylgeranial + L-cysteine + H2O2. Prenylcysteine oxidase that cleaves the thioether bond of prenyl-L-cysteines, such as farnesylcysteine and geranylgeranylcysteine. Only active against free prenylcysteines and not prenylcysteine residues within prenylated proteins or peptides. Involved in the final step in the degradation of prenylated proteins, by degrading prenylcysteines after the protein has been degraded. This is Prenylcysteine oxidase 1 from Bos taurus (Bovine).